A 93-amino-acid chain; its full sequence is Putative regulatory protein LA_2599 (93 aa).

Belongs to the RemA family.

This chain is Putative regulatory protein LA_2599, found in Leptospira interrogans serogroup Icterohaemorrhagiae serovar Lai (strain 56601).